The chain runs to 398 residues: Argininosuccinate synthase (398 aa).

Residues 9–17 (AYSGGVDTS) and Ala37 contribute to the ATP site. Residue Tyr88 participates in L-citrulline binding. Residue Gly118 participates in ATP binding. 3 residues coordinate L-aspartate: Thr120, Asn124, and Asp125. Asn124 serves as a coordination point for L-citrulline. The L-citrulline site is built by Arg128, Ser176, Ser185, Glu261, and Tyr273.

Belongs to the argininosuccinate synthase family. Type 1 subfamily. Homotetramer.

It is found in the cytoplasm. It carries out the reaction L-citrulline + L-aspartate + ATP = 2-(N(omega)-L-arginino)succinate + AMP + diphosphate + H(+). It functions in the pathway amino-acid biosynthesis; L-arginine biosynthesis; L-arginine from L-ornithine and carbamoyl phosphate: step 2/3. This Gloeobacter violaceus (strain ATCC 29082 / PCC 7421) protein is Argininosuccinate synthase.